The chain runs to 609 residues: Kelch-like protein 20 (609 aa).

The BTB domain occupies 68 to 135 (CDVVLVVGAK…AYTSQITVEE (68 aa)). The BACK domain maps to 170–272 (CLGIRAFADT…SPKFLVGTVG (103 aa)). Kelch repeat units lie at residues 319–365 (VLFA…VLDD), 367–413 (LYAV…VLGG), 414–460 (FLYA…VLGG), 462–507 (LYAV…VYQD), 509–554 (IYAV…VVNG), and 556–601 (LMAV…VIKM).

As to quaternary structure, component of the BCR(KLHL20) E3 ubiquitin ligase complex, at least composed of CUL3, KLHL20 and RBX1. Interacts with PDZ-RhoGEF/ARHGEF11, DAPK1, PML and CORO7. Interacts with F-actin. Interacts with IFN-gamma (IFNG). Interacts (via kelch repeats) with IVNS1ABP (via kelch repeats); this interaction blocks the assembly of CUL3-KLHL20 complex.

The protein localises to the cytoplasm. It is found in the perinuclear region. Its subcellular location is the nucleus. The protein resides in the golgi apparatus. It localises to the trans-Golgi network. The protein localises to the cell projection. It is found in the axon. Its subcellular location is the dendrite. The protein operates within protein modification; protein ubiquitination. In terms of biological role, substrate-specific adapter of a BCR (BTB-CUL3-RBX1) E3 ubiquitin-protein ligase complex involved in interferon response and anterograde Golgi to endosome transport. The BCR(KLHL20) E3 ubiquitin ligase complex mediates the ubiquitination of DAPK1, leading to its degradation by the proteasome, thereby acting as a negative regulator of apoptosis. The BCR(KLHL20) E3 ubiquitin ligase complex also specifically mediates 'Lys-33'-linked ubiquitination. Involved in anterograde Golgi to endosome transport by mediating 'Lys-33'-linked ubiquitination of CORO7, promoting interaction between CORO7 and EPS15, thereby facilitating actin polymerization and post-Golgi trafficking. Also acts as a regulator of endothelial migration during angiogenesis by controlling the activation of Rho GTPases. The BCR(KLHL20) E3 ubiquitin ligase complex acts as a regulator of neurite outgrowth by mediating ubiquitination and degradation of PDZ-RhoGEF/ARHGEF11. This Bos taurus (Bovine) protein is Kelch-like protein 20 (KLHL20).